The following is a 242-amino-acid chain: Agamous-like MADS-box protein MADS4 (242 aa).

An MADS-box domain is found at 1–61 (MGRGRVELKR…GKLYEFCSSS (61 aa)). The K-box domain maps to 89 to 185 (ELSSQQEYLK…GTQVNQLQWN (97 aa)).

As to expression, expressed in flowers and seeds.

The protein localises to the nucleus. Its function is as follows. Probable transcription factor involved in flower development. The sequence is that of Agamous-like MADS-box protein MADS4 from Vitis vinifera (Grape).